The primary structure comprises 486 residues: uncharacterized protein (486 aa).

The chain crosses the membrane as a helical span at residues 18–38 (TLLQLFVFTVICVFVLSGLAI). A compositionally biased stretch (basic and acidic residues) spans 62 to 79 (DRQKQMEKQQDSGEKRSF). 2 disordered regions span residues 62 to 82 (DRQK…FEST) and 117 to 147 (IESS…GPQM). Over residues 119–132 (SSSSSDSSSSSSSS) the composition is skewed to low complexity. 3 helical membrane-spanning segments follow: residues 324–344 (VVYL…MMSI), 365–385 (IGQF…LASV), and 451–471 (MLIL…LPSI).

This sequence belongs to the ABC-4 integral membrane protein family.

It localises to the cell membrane. This is an uncharacterized protein from Bacillus subtilis (strain 168).